The following is a 184-amino-acid chain: Ribosome maturation factor RimM (184 aa).

The region spanning 106–184 is the PRC barrel domain; sequence PGDYYWYQLE…RMIVDWDPEF (79 aa).

Belongs to the RimM family. In terms of assembly, binds ribosomal protein uS19.

The protein resides in the cytoplasm. Functionally, an accessory protein needed during the final step in the assembly of 30S ribosomal subunit, possibly for assembly of the head region. Essential for efficient processing of 16S rRNA. May be needed both before and after RbfA during the maturation of 16S rRNA. It has affinity for free ribosomal 30S subunits but not for 70S ribosomes. The chain is Ribosome maturation factor RimM from Chromohalobacter salexigens (strain ATCC BAA-138 / DSM 3043 / CIP 106854 / NCIMB 13768 / 1H11).